The following is a 453-amino-acid chain: Mogroside IIIx synthase (453 aa).

The active-site Proton acceptor is the histidine 21. The active-site Charge relay is the aspartate 122. UDP-alpha-D-glucose is bound by residues serine 273, glutamine 336, tryptophan 354, asparagine 355, serine 356, glutamate 359, aspartate 375, and glutamine 376.

It belongs to the UDP-glycosyltransferase family. Highly expressed in mature fruits.

The catalysed reaction is mogroside IIE + UDP-alpha-D-glucose = mogroside IIIX + UDP + H(+). It catalyses the reaction mogroside III + UDP-alpha-D-glucose = mogroside IV + UDP + H(+). It carries out the reaction mogroside III + UDP-alpha-D-glucose = siamenoside I + UDP + H(+). The enzyme catalyses mogroside IV + UDP-alpha-D-glucose = mogroside V + UDP + H(+). It functions in the pathway secondary metabolite biosynthesis; terpenoid biosynthesis. UDP-glycosyltransferase involved in the biosynthesis of cucurbitacin and mogroside tetracyclic triterpene natural products (e.g. siamenoside I and mogrosides IV, V and VI). Cucurbitacins have cytotoxic properties and exhibit deterrent taste as a defense barrier against herbivores. Mogrosides are nonsugar highly oxygenated compounds used as high-intensity zero-calorie sweeteners; they also possess pharmacological properties such as regulating immunity, lowering blood sugar and lipid levels, protecting the liver, and acting as antioxidants and antitumor agents. Catalyzes the branched glucosylations of mogroside II-E, mogroside III and mogroside IV. The sequence is that of Mogroside IIIx synthase from Siraitia grosvenorii (Monk's fruit).